We begin with the raw amino-acid sequence, 202 residues long: MSRYRGPRLRITRRLGDLPGLTRKAAKRSNPPGQHGNARRKRSEYAIRLEEKQKLRFNYGISERQLVRYVKKARAMEGSTGTNLLKLLEGRLDNVCFRLGFGPTIPGSRQLVNHGHVTVNGKTLDIASYQCKSGDTIAIRERKGSKKLAEGNLEFPGLANVPPHLELEKSKMTAKVTGKCDREWVAIEINELLVVEYYSRKV.

Positions 15-43 are disordered; it reads LGDLPGLTRKAAKRSNPPGQHGNARRKRS. The S4 RNA-binding domain occupies 90-152; sequence GRLDNVCFRL…KGSKKLAEGN (63 aa).

Belongs to the universal ribosomal protein uS4 family. Part of the 30S ribosomal subunit. Contacts protein S5. The interaction surface between S4 and S5 is involved in control of translational fidelity.

Functionally, one of the primary rRNA binding proteins, it binds directly to 16S rRNA where it nucleates assembly of the body of the 30S subunit. In terms of biological role, with S5 and S12 plays an important role in translational accuracy. This chain is Small ribosomal subunit protein uS4, found in Prochlorococcus marinus (strain SARG / CCMP1375 / SS120).